A 351-amino-acid polypeptide reads, in one-letter code: C(7)-cyclitol 7-kinase (351 aa).

It belongs to the ROK (NagC/XylR) family.

It carries out the reaction valienone + ATP = valienone 7-phosphate + ADP + H(+). It catalyses the reaction validone + ATP = validone 7-phosphate + ADP + H(+). Functionally, involved in the biosynthesis of the antifungal agent validamycin A. Catalyzes the phosphorylation of valienone and validone to their 7-phosphate derivatives. This Streptomyces hygroscopicus subsp. limoneus protein is C(7)-cyclitol 7-kinase.